Here is an 820-residue protein sequence, read N- to C-terminus: Serine/threonine-protein phosphatase 4 regulatory subunit 3-B (820 aa).

The region spanning 1 to 100 is the WH1 domain; the sequence is MSDTRRRVKV…DEIWEKICQV (100 aa). Positions 682–694 are enriched in acidic residues; that stretch reads ELWFNEDDEEEGE. Disordered regions lie at residues 682–711 and 750–820; these read ELWF…DFPE and AANG…RLGS. Residues 701 to 711 are compositionally biased toward basic and acidic residues; it reads EKTKPEDDFPE. Polar residues-rich tracts occupy residues 750-761 and 768-790; these read AANGANSTNSKS and PATS…STKG. The segment covering 798–809 has biased composition (acidic residues); sequence YPDDEDEEEEED.

It belongs to the SMEK family. As to quaternary structure, serine/threonine-protein phosphatase 4 (PP4) occurs in different assemblies of the catalytic and one or more regulatory subunits.

Regulatory subunit of serine/threonine-protein phosphatase 4 (PP4). The polypeptide is Serine/threonine-protein phosphatase 4 regulatory subunit 3-B (Xenopus laevis (African clawed frog)).